The chain runs to 513 residues: Bifunctional purine biosynthesis protein PurH (513 aa).

Residues 1-144 (MSKRALISVS…KNHERVGIVV (144 aa)) form the MGS-like domain.

Belongs to the PurH family.

The catalysed reaction is (6R)-10-formyltetrahydrofolate + 5-amino-1-(5-phospho-beta-D-ribosyl)imidazole-4-carboxamide = 5-formamido-1-(5-phospho-D-ribosyl)imidazole-4-carboxamide + (6S)-5,6,7,8-tetrahydrofolate. It carries out the reaction IMP + H2O = 5-formamido-1-(5-phospho-D-ribosyl)imidazole-4-carboxamide. Its pathway is purine metabolism; IMP biosynthesis via de novo pathway; 5-formamido-1-(5-phospho-D-ribosyl)imidazole-4-carboxamide from 5-amino-1-(5-phospho-D-ribosyl)imidazole-4-carboxamide (10-formyl THF route): step 1/1. The protein operates within purine metabolism; IMP biosynthesis via de novo pathway; IMP from 5-formamido-1-(5-phospho-D-ribosyl)imidazole-4-carboxamide: step 1/1. This chain is Bifunctional purine biosynthesis protein PurH, found in Moorella thermoacetica (strain ATCC 39073 / JCM 9320).